We begin with the raw amino-acid sequence, 62 residues long: Bowman-Birk type proteinase inhibitor B7 (62 aa).

5 disulfide bridges follow: cysteine 5-cysteine 59, cysteine 6-cysteine 23, cysteine 13-cysteine 21, cysteine 30-cysteine 37, and cysteine 34-cysteine 51.

It belongs to the Bowman-Birk serine protease inhibitor family. In terms of tissue distribution, expressed in bulb (at protein level).

In terms of biological role, serine protease inhibitor. Inhibits trypsin (Ki = 65 nM) and weakly inhibits chymotrypsin (Ki = 295 nM). Does not inhibit bacterial subtilisin. This Hyacinthus orientalis (Common hyacinth) protein is Bowman-Birk type proteinase inhibitor B7.